Here is a 340-residue protein sequence, read N- to C-terminus: Ava biosynthesis cluster protein G (340 aa).

4 consecutive transmembrane segments (helical) span residues 15–35, 81–101, 118–138, and 148–168; these read WSAFWLWAIIGGYFAAFNIWN, FMISTDFITSACSVIALLQFV, AFFVMMGFGAPSGIMVAVHAF, and LSIMLTGVLTICFLATSFLCI. The N-linked (GlcNAc...) asparagine glycan is linked to N171. Helical transmembrane passes span 219–239 and 315–335; these read FSSVYLIIPEVMNWTLGYVAF and SALTAVCLLLRYVGLILWLQI.

The protein resides in the membrane. Its pathway is secondary metabolite biosynthesis. Its function is as follows. Part of the cluster that mediates the biosynthesis of a highly modified cyclo-arginine-tryptophan dipeptide (cRW). The first step of the pathway is perfornmed by the arginine-containing cyclodipeptide synthase (RCPDS) avaA that acts as the scaffold-generating enzyme and is responsible for formation of the cyclo-Arg-Trp (cRW) diketopiperazine. AvaB then acts as a multifunctional flavoenzyme that is responsible for generating the cyclo-Arg-formylkynurenine DKP, which can be deformylated by avaC. AvaB then further catalyzes an additional N-oxidation followed by cyclization and dehydration. The next step is an N-acetylation of the guanidine group catalyzed by the arginine N-acetyltransferase avaD. The roles of the additional enzymes identified within the ava cluster still have to be determined. This Aspergillus versicolor protein is Ava biosynthesis cluster protein G.